Here is a 478-residue protein sequence, read N- to C-terminus: Glutamine synthetase (478 aa).

One can recognise a GS beta-grasp domain in the interval 16–100; that stretch reads EKVEYVDVRF…INFFVHDPFT (85 aa). Residues 108 to 478 form the GS catalytic domain; the sequence is PRNIARKAEN…PYEFALYYDV (371 aa). Mg(2+)-binding residues include Glu-133 and Glu-135. An ATP-binding site is contributed by Glu-214. Positions 219 and 227 each coordinate Mg(2+). 230–232 is a binding site for ATP; sequence YQF. L-glutamate is bound by residues 271-272 and Gly-272; that span reads NG. His-276 serves as a coordination point for Mg(2+). Residues 278 to 280 and Ser-280 contribute to the ATP site; that span reads HQS. The L-glutamate site is built by Arg-329, Glu-335, and Arg-347. 3 residues coordinate ATP: Arg-347, Arg-352, and Lys-361. Glu-366 is a Mg(2+) binding site. Arg-368 contributes to the L-glutamate binding site. Tyr-406 carries the post-translational modification O-AMP-tyrosine.

Belongs to the glutamine synthetase family. In terms of assembly, oligomer of 12 subunits arranged in the form of two hexagons. Mg(2+) is required as a cofactor.

The protein resides in the cytoplasm. The catalysed reaction is L-glutamate + NH4(+) + ATP = L-glutamine + ADP + phosphate + H(+). With respect to regulation, when cellular nitrogen levels are high, the C-terminal adenylyl transferase (AT) of GlnE inhibits GlnA by covalent transfer of an adenylyl group from ATP to Tyr-406. Conversely, when nitrogen levels are low, the N-terminal adenylyl removase (AR) of GlnE activates GlnA by removing the adenylyl group by phosphorolysis. The fully adenylated enzyme complex is inactive. Involved in nitrogen metabolism via ammonium assimilation. Catalyzes the ATP-dependent biosynthesis of glutamine from glutamate and ammonia. Also plays a key role in controlling the ammonia levels within infected host cells and so contributes to the pathogens capacity to inhibit phagosome acidification and phagosome-lysosome fusion. Involved in cell wall biosynthesis via the production of the major component poly-L-glutamine (PLG). PLG synthesis in the cell wall occurs only in nitrogen limiting conditions and on the contrary high nitrogen conditions inhibit PLG synthesis. In Mycobacterium bovis (strain ATCC BAA-935 / AF2122/97), this protein is Glutamine synthetase.